The following is a 54-amino-acid chain: MPQLNPIPWVFLFFLVWLVLGFLGLQKFTSIVTTTLDDSSEEVEVKSKEYSWPW.

A helical membrane pass occupies residues 9–25 (WVFLFFLVWLVLGFLGL).

This sequence belongs to the ATPase protein 8 family. As to quaternary structure, F-type ATPases have 2 components, CF(1) - the catalytic core - and CF(0) - the membrane proton channel.

Its subcellular location is the mitochondrion membrane. Mitochondrial membrane ATP synthase (F(1)F(0) ATP synthase or Complex V) produces ATP from ADP in the presence of a proton gradient across the membrane which is generated by electron transport complexes of the respiratory chain. F-type ATPases consist of two structural domains, F(1) - containing the extramembraneous catalytic core and F(0) - containing the membrane proton channel, linked together by a central stalk and a peripheral stalk. During catalysis, ATP synthesis in the catalytic domain of F(1) is coupled via a rotary mechanism of the central stalk subunits to proton translocation. Part of the complex F(0) domain. Minor subunit located with subunit a in the membrane. The protein is ATP synthase protein 8 (MTATP8) of Branchiostoma floridae (Florida lancelet).